The primary structure comprises 314 residues: MRPLAIIGPTGAGKSQLALDVAARLGARVSVEIVNADAMQLYRGMDIGTAKLPVSERRGIPHHQLDVLDVTETATVARYQRAAAADIEAIAARGAVPVVVGGSMLYVQSLLDDWSFPATDPSVRARWERRLAEVGVDRLHAELARRDPAAAAAILPTDARRTVRALEVVELTGQPFAASAPRIGAPRWDTVIVGLDCQTTILDERLARRTDLMFDQGLVEEVRTLLRNGLREGVTASRALGYAQVIAALDAGAGADMMRAAREQTYLGTRRYVRRQRSWFRRDHRVHWLDAGVASSPDRARLVDDAVRLWRHVT.

8 to 15 (GPTGAGKS) lines the ATP pocket. 10–15 (TGAGKS) is a binding site for substrate.

This sequence belongs to the IPP transferase family. In terms of assembly, monomer. Mg(2+) is required as a cofactor.

The enzyme catalyses adenosine(37) in tRNA + dimethylallyl diphosphate = N(6)-dimethylallyladenosine(37) in tRNA + diphosphate. Catalyzes the transfer of a dimethylallyl group onto the adenine at position 37 in tRNAs that read codons beginning with uridine, leading to the formation of N6-(dimethylallyl)adenosine (i(6)A). This is tRNA dimethylallyltransferase from Mycobacterium tuberculosis (strain ATCC 25177 / H37Ra).